We begin with the raw amino-acid sequence, 325 residues long: Ferrochelatase (325 aa).

H172 and E267 together coordinate Fe cation.

This sequence belongs to the ferrochelatase family.

The protein localises to the cytoplasm. The catalysed reaction is heme b + 2 H(+) = protoporphyrin IX + Fe(2+). It functions in the pathway porphyrin-containing compound metabolism; protoheme biosynthesis; protoheme from protoporphyrin-IX: step 1/1. Its function is as follows. Catalyzes the ferrous insertion into protoporphyrin IX. This chain is Ferrochelatase, found in Acidobacterium capsulatum (strain ATCC 51196 / DSM 11244 / BCRC 80197 / JCM 7670 / NBRC 15755 / NCIMB 13165 / 161).